Here is a 353-residue protein sequence, read N- to C-terminus: UPF0283 membrane protein YcjF (353 aa).

Over residues 1-19 (MSEPLKPRIDFAEPLKEEP) the composition is skewed to basic and acidic residues. Positions 1-35 (MSEPLKPRIDFAEPLKEEPTSAFKAQQTFSEAESR) are disordered. The next 3 helical transmembrane spans lie at 70–90 (MVMGGLALFGASVVGQGVQWT), 100–120 (VALGGCAAGALIVGAGVGSVV), and 213–233 (ESTLMIAVSPLALVDMAFIAW).

Belongs to the UPF0283 family.

The protein localises to the cell inner membrane. The protein is UPF0283 membrane protein YcjF of Salmonella paratyphi A (strain AKU_12601).